The chain runs to 349 residues: Glycerol-3-phosphate dehydrogenase [NAD(+)], cytoplasmic (349 aa).

Residues 10 to 15 (GSGDWG), Lys-120, and Ala-153 each bind NAD(+). Lys-120 is a substrate binding site. Residue Ser-154 is modified to Phosphoserine. Lys-204 serves as the catalytic Proton acceptor. Residue Arg-269 coordinates NAD(+). Substrate is bound at residue 269–270 (RN). Lys-289 carries the post-translational modification N6-succinyllysine. The NAD(+) site is built by Lys-296 and Gln-298. Tyr-326 carries the post-translational modification Phosphotyrosine.

It belongs to the NAD-dependent glycerol-3-phosphate dehydrogenase family. As to quaternary structure, homodimer.

The protein localises to the cytoplasm. The catalysed reaction is sn-glycerol 3-phosphate + NAD(+) = dihydroxyacetone phosphate + NADH + H(+). Its function is as follows. Has glycerol-3-phosphate dehydrogenase activity. In Oryctolagus cuniculus (Rabbit), this protein is Glycerol-3-phosphate dehydrogenase [NAD(+)], cytoplasmic (GPD1).